Consider the following 357-residue polypeptide: ATP-dependent 6-phosphofructokinase (357 aa).

Residues G12, 80–81 (KG), and 107–110 (GDGS) contribute to the ATP site. Residue D108 coordinates Mg(2+). Residues 131–133 (TID), R168, 175–177 (MGR), E229, R272, and 278–281 (HIQR) contribute to the substrate site. The active-site Proton acceptor is the D133.

The protein belongs to the phosphofructokinase type A (PFKA) family. Mixed-substrate PFK group III subfamily. In terms of assembly, homodimer or homotetramer. Mg(2+) serves as cofactor.

The protein resides in the cytoplasm. It catalyses the reaction beta-D-fructose 6-phosphate + ATP = beta-D-fructose 1,6-bisphosphate + ADP + H(+). It functions in the pathway carbohydrate degradation; glycolysis; D-glyceraldehyde 3-phosphate and glycerone phosphate from D-glucose: step 3/4. With respect to regulation, subject to allosteric activation by ADP and other diphosphonucleosides, and inhibition by phosphoenolpyruvate. Its function is as follows. Catalyzes the phosphorylation of D-fructose 6-phosphate to fructose 1,6-bisphosphate by ATP, the first committing step of glycolysis. This Trichormus variabilis (strain ATCC 29413 / PCC 7937) (Anabaena variabilis) protein is ATP-dependent 6-phosphofructokinase.